The following is a 124-amino-acid chain: S-adenosylmethionine decarboxylase proenzyme (124 aa).

The active-site Schiff-base intermediate with substrate; via pyruvic acid is serine 71. At serine 71 the chain carries Pyruvic acid (Ser); by autocatalysis. Histidine 76 functions as the Proton acceptor; for processing activity in the catalytic mechanism. Cysteine 91 serves as the catalytic Proton donor; for catalytic activity.

It belongs to the prokaryotic AdoMetDC family. Type 1 subfamily. As to quaternary structure, heterotetramer of two alpha and two beta chains arranged as a dimer of alpha/beta heterodimers. Pyruvate serves as cofactor. Post-translationally, is synthesized initially as an inactive proenzyme. Formation of the active enzyme involves a self-maturation process in which the active site pyruvoyl group is generated from an internal serine residue via an autocatalytic post-translational modification. Two non-identical subunits are generated from the proenzyme in this reaction, and the pyruvate is formed at the N-terminus of the alpha chain, which is derived from the carboxyl end of the proenzyme. The post-translation cleavage follows an unusual pathway, termed non-hydrolytic serinolysis, in which the side chain hydroxyl group of the serine supplies its oxygen atom to form the C-terminus of the beta chain, while the remainder of the serine residue undergoes an oxidative deamination to produce ammonia and the pyruvoyl group blocking the N-terminus of the alpha chain.

The enzyme catalyses S-adenosyl-L-methionine + H(+) = S-adenosyl 3-(methylsulfanyl)propylamine + CO2. It functions in the pathway amine and polyamine biosynthesis; S-adenosylmethioninamine biosynthesis; S-adenosylmethioninamine from S-adenosyl-L-methionine: step 1/1. Competitively inhibited by methylglyoxal bis-guanylhydrazone. Irreversibly inhibited by NaBH(4) in vitro. Its function is as follows. Catalyzes the decarboxylation of S-adenosylmethionine to S-adenosylmethioninamine (dcAdoMet), the propylamine donor required for the synthesis of the polyamines spermine and spermidine from the diamine putrescine. Has no arginine decarboxylase (ArgDC) activity. The sequence is that of S-adenosylmethionine decarboxylase proenzyme (speH) from Saccharolobus solfataricus (strain ATCC 35092 / DSM 1617 / JCM 11322 / P2) (Sulfolobus solfataricus).